The following is a 439-amino-acid chain: GTPase Obg (439 aa).

One can recognise an Obg domain in the interval Thr5 to Leu164. An OBG-type G domain is found at Ala165–Arg335. GTP contacts are provided by residues Gly171–Ser178, Phe196–Thr200, Asp217–Gly220, Asn287–Asp290, and Ser316–Ala318. Mg(2+) is bound by residues Ser178 and Thr198. An OCT domain is found at Leu356–Asp433.

Belongs to the TRAFAC class OBG-HflX-like GTPase superfamily. OBG GTPase family. As to quaternary structure, monomer. The cofactor is Mg(2+).

The protein resides in the cytoplasm. Functionally, an essential GTPase which binds GTP, GDP and possibly (p)ppGpp with moderate affinity, with high nucleotide exchange rates and a fairly low GTP hydrolysis rate. Plays a role in control of the cell cycle, stress response, ribosome biogenesis and in those bacteria that undergo differentiation, in morphogenesis control. This is GTPase Obg from Chloroflexus aurantiacus (strain ATCC 29364 / DSM 637 / Y-400-fl).